The sequence spans 458 residues: Phosphoglucosamine mutase (458 aa).

The active-site Phosphoserine intermediate is S100. 4 residues coordinate Mg(2+): S100, D239, D241, and D243. S100 bears the Phosphoserine mark.

It belongs to the phosphohexose mutase family. The cofactor is Mg(2+). In terms of processing, activated by phosphorylation.

It carries out the reaction alpha-D-glucosamine 1-phosphate = D-glucosamine 6-phosphate. In terms of biological role, catalyzes the conversion of glucosamine-6-phosphate to glucosamine-1-phosphate. The chain is Phosphoglucosamine mutase from Dictyoglomus thermophilum (strain ATCC 35947 / DSM 3960 / H-6-12).